The sequence spans 227 residues: Cytidylate kinase (227 aa).

12-20 (GPSGAGKGT) contributes to the ATP binding site.

This sequence belongs to the cytidylate kinase family. Type 1 subfamily.

The protein resides in the cytoplasm. The enzyme catalyses CMP + ATP = CDP + ADP. It carries out the reaction dCMP + ATP = dCDP + ADP. The sequence is that of Cytidylate kinase from Citrobacter koseri (strain ATCC BAA-895 / CDC 4225-83 / SGSC4696).